Reading from the N-terminus, the 149-residue chain is Detocs response regulatory protein DtcB (149 aa).

The Response regulatory domain maps to 1 to 134; the sequence is MILIVEDDAH…DIEACYYDHN (134 aa). D53 carries the post-translational modification 4-aspartylphosphate.

Post-translationally, probably phosphorylated by DtcA.

Possible phosphate scavenger member of the two-component regulatory system Detocs that confers resistance to bacteriophage. When the system (DtcA-DtcB-DtcC) is expressed in a susceptible E.coli (strain MG1655) it confers resistance to bacteriophages T2, T4, T5, T6 and SECphi27. Detocs inhibits T5 infection leading to growth arrest but not complete cell lysis, during SECphi27 infection leads to cell lysis. Overexpression of this protein along with the intact Detocs locus cancels T5 immunity; when the phosphate-receiving Asp-53 is mutated to Ala in this protein, immunity is restored. DtcA probably autophosphorylates upon sensing viral infection, and subsequently transfers the phosphate signal to DtcC which activates it, leading to an antiviral defense; DtcB (this subunit) may scavenge phosphorylation signals from accidental activation of DtcA. The polypeptide is Detocs response regulatory protein DtcB (Vibrio alginolyticus).